A 394-amino-acid chain; its full sequence is Flavohemoprotein (394 aa).

The Globin domain maps to 1–136 (MLSENTINIV…LANVFIQREE (136 aa)). Position 85 (histidine 85) interacts with heme b. Residues tyrosine 95 and glutamate 135 each act as charge relay system in the active site. The segment at 147–394 (GGWRGLREFE…YECFGPHKVV (248 aa)) is reductase. In terms of domain architecture, FAD-binding FR-type spans 150–255 (RGLREFELVE…AAPAGDFFLD (106 aa)). FAD is bound by residues tyrosine 188 and 204-207 (RQYS). Position 268-273 (268-273 (GVGLTP)) interacts with NADP(+). 387-390 (CFGP) is an FAD binding site.

The protein belongs to the globin family. Two-domain flavohemoproteins subfamily. It in the C-terminal section; belongs to the flavoprotein pyridine nucleotide cytochrome reductase family. The cofactor is heme b. FAD serves as cofactor.

The catalysed reaction is 2 nitric oxide + NADPH + 2 O2 = 2 nitrate + NADP(+) + H(+). It catalyses the reaction 2 nitric oxide + NADH + 2 O2 = 2 nitrate + NAD(+) + H(+). Functionally, is involved in NO detoxification in an aerobic process, termed nitric oxide dioxygenase (NOD) reaction that utilizes O(2) and NAD(P)H to convert NO to nitrate, which protects the bacterium from various noxious nitrogen compounds. Therefore, plays a central role in the inducible response to nitrosative stress. The chain is Flavohemoprotein from Vibrio vulnificus (strain YJ016).